The chain runs to 120 residues: Aspartate 1-decarboxylase (120 aa).

The active-site Schiff-base intermediate with substrate; via pyruvic acid is Ser24. Position 24 is a pyruvic acid (Ser) (Ser24). Residue Thr56 participates in substrate binding. The active-site Proton donor is Tyr57. Position 70 to 72 (70 to 72 (GAA)) interacts with substrate.

This sequence belongs to the PanD family. Heterooctamer of four alpha and four beta subunits. It depends on pyruvate as a cofactor. Is synthesized initially as an inactive proenzyme, which is activated by self-cleavage at a specific serine bond to produce a beta-subunit with a hydroxyl group at its C-terminus and an alpha-subunit with a pyruvoyl group at its N-terminus.

The protein localises to the cytoplasm. The enzyme catalyses L-aspartate + H(+) = beta-alanine + CO2. It participates in cofactor biosynthesis; (R)-pantothenate biosynthesis; beta-alanine from L-aspartate: step 1/1. In terms of biological role, catalyzes the pyruvoyl-dependent decarboxylation of aspartate to produce beta-alanine. This chain is Aspartate 1-decarboxylase, found in Pyrobaculum islandicum (strain DSM 4184 / JCM 9189 / GEO3).